Consider the following 286-residue polypeptide: MTIIVKAPAKINLVLDATAKRPDGYHDVHMVMTTVDLADRLELTELASGEIRMNAQHAYVPNDERNLAYKAAAVLKERFDIKSGVEIYLEKQIPVAAGLAGGSSDAAATLRGLNELWKLNLTLEQLAEIGSEVGSDVPFCVMGGTAIATGRGEKLEKLVSPPPCWVVLAKPTIGVSTADVYGALDLETAERPDVGAMIDAVKNQDFTAICESLGNVLESVTLPMHPEVEQIKAFMTSCGAEGVLMSGSGPTVFALTEHENRAQRLYNGLRGFCNEVYVVRLLGENH.

Residue Lys10 is part of the active site. Position 94 to 104 (94 to 104) interacts with ATP; it reads PVAAGLAGGSS. Residue Asp136 is part of the active site.

This sequence belongs to the GHMP kinase family. IspE subfamily.

The enzyme catalyses 4-CDP-2-C-methyl-D-erythritol + ATP = 4-CDP-2-C-methyl-D-erythritol 2-phosphate + ADP + H(+). Its pathway is isoprenoid biosynthesis; isopentenyl diphosphate biosynthesis via DXP pathway; isopentenyl diphosphate from 1-deoxy-D-xylulose 5-phosphate: step 3/6. Catalyzes the phosphorylation of the position 2 hydroxy group of 4-diphosphocytidyl-2C-methyl-D-erythritol. The sequence is that of 4-diphosphocytidyl-2-C-methyl-D-erythritol kinase from Exiguobacterium sibiricum (strain DSM 17290 / CCUG 55495 / CIP 109462 / JCM 13490 / 255-15).